Reading from the N-terminus, the 165-residue chain is Small ribosomal subunit protein uS5 (165 aa).

The region spanning 13-76 (LEEKVLVVNR…EAARKNLITI (64 aa)) is the S5 DRBM domain.

The protein belongs to the universal ribosomal protein uS5 family. Part of the 30S ribosomal subunit. Contacts proteins S4 and S8.

Functionally, with S4 and S12 plays an important role in translational accuracy. Its function is as follows. Located at the back of the 30S subunit body where it stabilizes the conformation of the head with respect to the body. This chain is Small ribosomal subunit protein uS5, found in Chlamydia caviae (strain ATCC VR-813 / DSM 19441 / 03DC25 / GPIC) (Chlamydophila caviae).